A 433-amino-acid chain; its full sequence is SPI-2 type 3 secretion system ATPase (433 aa).

165-170 (GVGKST) serves as a coordination point for ATP.

The protein belongs to the ATPase alpha/beta chains family. T3SS ATPase subfamily. As to quaternary structure, the core secretion machinery of the T3SS is composed of approximately 20 different proteins, including cytoplasmic components, a base, an export apparatus and a needle. This subunit is part of the cytosolic complex. Forms homohexamers. Forms a complex with SsaK/SctL (stator protein) and SsaQ/SctQ (the major sorting platform component). Interacts with the T3SS-2 specific chaperones SsaE, SseA, SscA, SscB, and SrcA.

Its subcellular location is the cytoplasm. It carries out the reaction ATP + H2O + cellular proteinSide 1 = ADP + phosphate + cellular proteinSide 2.. ATPase component of the type III secretion system (T3SS), also called injectisome, which is used to inject bacterial effector proteins into eukaryotic host cells. Acts as a molecular motor to provide the energy that is required for the export of proteins. Required for type III secretion apparatus (T3SA) formation, secretion of a subset of SPI-2 effectors and virulence. May play a critical role in T3SS substrate recognition, disassembly of the effector/chaperone complex and unfolding of the effector in an ATP-dependent manner prior to secretion. Releases the effector protein SseB from the T3SS-2 specific chaperone SsaE in an ATP-dependent manner. This Salmonella typhimurium (strain LT2 / SGSC1412 / ATCC 700720) protein is SPI-2 type 3 secretion system ATPase.